The primary structure comprises 204 residues: LexA repressor (204 aa).

Residues 31–51 (VREIGQAVGLKSSSTVHTHLV) constitute a DNA-binding region (H-T-H motif). Catalysis depends on for autocatalytic cleavage activity residues serine 128 and lysine 165.

It belongs to the peptidase S24 family. In terms of assembly, homodimer.

It carries out the reaction Hydrolysis of Ala-|-Gly bond in repressor LexA.. In terms of biological role, represses a number of genes involved in the response to DNA damage (SOS response), including recA and lexA. In the presence of single-stranded DNA, RecA interacts with LexA causing an autocatalytic cleavage which disrupts the DNA-binding part of LexA, leading to derepression of the SOS regulon and eventually DNA repair. This chain is LexA repressor, found in Syntrophomonas wolfei subsp. wolfei (strain DSM 2245B / Goettingen).